We begin with the raw amino-acid sequence, 304 residues long: Homoserine kinase (304 aa).

92 to 102 (PLARGLGSSAT) is an ATP binding site.

The protein belongs to the GHMP kinase family. Homoserine kinase subfamily.

Its subcellular location is the cytoplasm. The enzyme catalyses L-homoserine + ATP = O-phospho-L-homoserine + ADP + H(+). The protein operates within amino-acid biosynthesis; L-threonine biosynthesis; L-threonine from L-aspartate: step 4/5. Catalyzes the ATP-dependent phosphorylation of L-homoserine to L-homoserine phosphate. The protein is Homoserine kinase of Nostoc punctiforme (strain ATCC 29133 / PCC 73102).